Reading from the N-terminus, the 614-residue chain is Fructokinase-like 2, chloroplastic (614 aa).

The N-terminal 44 residues, 1–44 (MASLSFTQFLSFPRCNADVPCLLQSHGFVKFRGERWNGKQSFSM), are a transit peptide targeting the chloroplast. Disordered stretches follow at residues 47–75 (GRRKLSESAPLEEEGNDGNGAVVGKKPSK) and 542–592 (GYPP…YVMK). Acidic residues predominate over residues 548-563 (DMEEEEDDEEEDEVES). Basic and acidic residues predominate over residues 571-583 (ITEKEYRTSKPYD).

This sequence belongs to the carbohydrate kinase PfkB family. As to quaternary structure, interacts with CITRX/TRXz. Binds to FLN1 and PTAC5. Associates with the plastid-encoded RNA polymerase (PEP) complex.

It localises to the plastid. The protein resides in the chloroplast. Required for proper chloroplast development, most likely through regulating plastid-encoded polymerase (PEP) dependent chloroplast transcription. Acts as a component of the transcriptionally active plastid chromosome that is required for plastid gene expression. In Arabidopsis thaliana (Mouse-ear cress), this protein is Fructokinase-like 2, chloroplastic.